A 559-amino-acid chain; its full sequence is Frizzled-5 (559 aa).

The signal sequence occupies residues 1 to 26 (MGSFRSGVFALSFVVLLLDYFAPAQA). Residues 27 to 220 (ASKAIVCQEI…QPYFTQDEKM (194 aa)) lie on the Extracellular side of the membrane. An FZ domain is found at 28–149 (SKAIVCQEIT…GDPDTLCMYY (122 aa)). 5 disulfides stabilise this stretch: Cys-33–Cys-94, Cys-41–Cys-87, Cys-78–Cys-116, Cys-105–Cys-146, and Cys-109–Cys-133. N-linked (GlcNAc...) asparagine glycosylation is present at Asn-47. Residue Asn-150 is glycosylated (N-linked (GlcNAc...) asparagine). The chain crosses the membrane as a helical span at residues 221–241 (FVTFWIGLWSILCFISTFTTV). The Cytoplasmic segment spans residues 242 to 257 (ATFLIDMERFRYPERP). The helical transmembrane segment at 258–278 (IIFLSACYLFVSIGYVVRLIV) threads the bilayer. The Extracellular portion of the chain corresponds to 279-301 (GHENVACNKDHIHYETTGPALCT). Residues 302–322 (IVFLLIYFFGMASSIWWVILT) traverse the membrane as a helical segment. Residues 323–343 (FTWFLAAGMKWGNEAIASYSQ) lie on the Cytoplasmic side of the membrane. Residues 344 to 364 (YFHMAAWLIPSVKSIAVLALS) traverse the membrane as a helical segment. At 365 to 387 (SVDGDPVAGICYVGNQNLDNLRG) the chain is on the extracellular side. The chain crosses the membrane as a helical span at residues 388-408 (FVLAPLVVYLFSGTMFLLAGF). The Cytoplasmic segment spans residues 409 to 434 (VSLFRIRSVIKQGGTKTDKLEKLMIR). Residues 435-455 (IGIFSVLYTVPATIVVACYIY) form a helical membrane-spanning segment. Topologically, residues 456-483 (EQHYREHWEKTHNCSCPGDKQRYRPDYA) are extracellular. The N-linked (GlcNAc...) asparagine glycan is linked to Asn-468. Residues 484 to 504 (VFMLKYLMCLVVGITSGVWIW) traverse the membrane as a helical segment. Over 505-559 (SGKTLESWKRFTGRCCRNSKPINASAYSEASRALTPRTGLSNLTLPHKQVPLSHV) the chain is Cytoplasmic. The short motif at 507–512 (KTLESW) is the Lys-Thr-X-X-X-Trp motif, mediates interaction with the PDZ domain of Dvl family members element. A PDZ-binding motif is present at residues 557–559 (SHV).

The protein belongs to the G-protein coupled receptor Fz/Smo family. Expressed in retina.

It is found in the cell membrane. Its subcellular location is the golgi apparatus membrane. Receptor for Wnt proteins that functions in the canonical Wnt/beta-catenin signaling pathway. The canonical Wnt/beta-catenin signaling pathway leads to the activation of disheveled proteins, inhibition of GSK-3 kinase, nuclear accumulation of beta-catenin and activation of Wnt target genes. A second signaling pathway involving PKC and calcium fluxes has been seen for some family members, but it is not yet clear if it represents a distinct pathway or if it can be integrated in the canonical pathway, as PKC seems to be required for Wnt-mediated inactivation of GSK-3 kinase. Both pathways seem to involve interactions with G-proteins. May be involved in transduction and intercellular transmission of polarity information during tissue morphogenesis and/or in differentiated tissues. The protein is Frizzled-5 (fzd5) of Xenopus laevis (African clawed frog).